The following is a 456-amino-acid chain: Protein MGA1 (456 aa).

A DNA-binding region spans residues 3–118 (PKTFVHQLHA…ILNKIQRKST (116 aa)). Residues 229-299 (SIVQPQQPQQ…QPLPTVPPYS (71 aa)) are disordered. Composition is skewed to low complexity over residues 231–246 (VQPQQPQQVLSPQALS), 253–267 (SGTLSSTDDLKTTSL), and 283–299 (QQQQQQQQPLPTVPPYS).

The protein belongs to the HSF family.

It is found in the nucleus. The polypeptide is Protein MGA1 (MGA1) (Saccharomyces cerevisiae (strain ATCC 204508 / S288c) (Baker's yeast)).